We begin with the raw amino-acid sequence, 62 residues long: MKNTILILFTAFIALLGFFGMSAEADPIADPIADPISGPNAEADPEAINLKAIAALAKKLFG.

An N-terminal signal peptide occupies residues 1-25 (MKNTILILFTAFIALLGFFGMSAEA). AXPX repeat units lie at residues 25–28 (ADPI), 29–32 (ADPI), 33–36 (ADPI), and 43–46 (ADPE). The propeptide occupies 26 to 47 (DPIADPIADPISGPNAEADPEA). Phenylalanine 61 is modified (phenylalanine amide).

Belongs to the MCD family. Mastoparan subfamily. Expressed by the venom gland.

Its subcellular location is the secreted. It localises to the target cell membrane. In terms of biological role, antimicrobial and mast cell degranulating peptide. Has broad spectrum antibacterial activity against both Gram-positive and Gram-negative bacteria (S.aureus MIC=16-32 ug/ml, S.xylosus MIC=1.5 ug/ml, S.alactolyticus MIC=8 ug/ml, C.koseri MIC=4 ug/ml, E.coli MIC=4-32 ug/ml, K.pneumoniae MIC=32 ug/ml, P.aerugiosa MIC=96 ug/ml, S.choleraesuis MIC=16 ug/ml, S.typhimurium MIC=32 ug/ml, V.parahamelytics MIC=16 ug/ml). Is also active on multi-antibiotic resistant hemolytic E.coli O157:H7. Acts by affecting membrane permeability. On E.coli O157:H7, acts through multiple membrane disruption patterns, including large perforations (full opening) at apical ends (hollow tubes), vesicle budding, forming dents, and membrane corrugation and invagination leading to irregular pits or pores. Exerts 40% lower membrane permeabilization activities on E.coli O157:H7 than on the non-pathogen E.coli BL21. Shows little hemolytic activities on sheep, chicken and human erythrocytes, but with a higher activity on chicken erythrocytes. Its mast cell degranulation activity may be related to the activation of G-protein coupled receptors in mast cells as well as interaction with other proteins located in cell endosomal membranes in the mast cells. This is Mastoparan-AF from Vespa affinis (Lesser banded hornet).